The primary structure comprises 344 residues: Galactoside alpha-(1,2)-fucosyltransferase 2 (344 aa).

The Cytoplasmic portion of the chain corresponds to 1 to 7 (MFSTQTF). A helical; Signal-anchor for type II membrane protein membrane pass occupies residues 8-28 (FFFPTAPFILFVFTASTIFHL). The Lumenal segment spans residues 29–344 (HQRLEKMQPT…PADLSPLLKH (316 aa)). N189, N255, N283, and N309 each carry an N-linked (GlcNAc...) asparagine glycan.

Expressed in brain, heart, lung, intestin and kidney.

Its subcellular location is the golgi apparatus. The protein localises to the golgi stack membrane. It catalyses the reaction a beta-D-galactosyl-(1-&gt;3)-N-acetyl-beta-D-glucosaminyl derivative + GDP-beta-L-fucose = an alpha-L-Fuc-(1-&gt;2)-beta-D-Gal-(1-&gt;3)-beta-D-GlcNAc derivative + GDP + H(+). The catalysed reaction is a beta-D-galactosyl-(1-&gt;4)-N-acetyl-beta-D-glucosaminyl derivative + GDP-beta-L-fucose = an alpha-L-Fuc-(1-&gt;2)-beta-D-Gal-(1-&gt;4)-beta-D-GlcNAc derivative + GDP + H(+). The enzyme catalyses a ganglioside GM1 + GDP-beta-L-fucose = a ganglioside Fuc-GM1 + GDP + H(+). It carries out the reaction a neolactoside nLc4Cer + GDP-beta-L-fucose = a neolactoside IV(2)-alpha-Fuc-nLc4Cer + GDP + H(+). It catalyses the reaction a neolactoside nLc4Cer(d18:1(4E)) + GDP-beta-L-fucose = a neolactoside IV(2)-alpha-Fuc-nLc4Cer(d18:1(4E)) + GDP + H(+). The catalysed reaction is a ganglioside GA1 + GDP-beta-L-fucose = a ganglioside Fuc-GA1 + GDP + H(+). The enzyme catalyses Lc4Cer + GDP-beta-L-fucose = alpha-L-fucosyl-(1-&gt;2)-beta-D-galactosyl-(1-&gt;3)-N-acetyl-beta-D-glucosaminyl-(1-&gt;3)-beta-D-galactosyl-(1-&gt;4)-beta-D-glucosyl-(1&lt;-&gt;1')-ceramide + GDP + H(+). It carries out the reaction a beta-D-Gal-(1-&gt;3)-beta-D-GlcNAc-(1-&gt;3)-beta-D-Gal-(1-&gt;4)-beta-D-Glc-(1&lt;-&gt;1')-Cer(d18:1(4E)) + GDP-beta-L-fucose = alpha-L-fucosyl-(1-&gt;2)- beta-D-galactosyl-(1-&gt;3)-N-acetyl-beta-D-glucosaminyl-(1-&gt;3)-beta-D-galactosyl-(1-&gt;4)-beta-D-glucosyl-(1&lt;-&gt;1')-N-acylsphing-4-enine + GDP + H(+). It catalyses the reaction a ganglioside GD1b + GDP-beta-L-fucose = a ganglioside Fuc-GD1b + GDP + H(+). The catalysed reaction is a ganglioside GM1 (d18:1(4E)) + GDP-beta-L-fucose = a ganglioside Fuc-GM1 (d18:1(4E)) + GDP + H(+). The enzyme catalyses a globoside GalGb4Cer (d18:1(4E)) + GDP-beta-L-fucose = a globoside Globo-H (d18:1(4E)) + GDP + H(+). It carries out the reaction a lactoside III(4)-a-Fuc-Lc4Cer + GDP-beta-L-fucose = a lactoside IV(2),III(4)-a-[Fuc]2-Lc4Cer + GDP + H(+). It catalyses the reaction beta-D-galactosyl-(1-&gt;3)-N-acetyl-D-galactosamine + GDP-beta-L-fucose = alpha-L-fucosyl-(1-&gt;2)-beta-D-galactosyl-(1-&gt;3)-N-acetyl-D-galactosamine + GDP + H(+). It participates in protein modification; protein glycosylation. Its function is as follows. Catalyzes the transfer of L-fucose, from a guanosine diphosphate-beta-L-fucose, to the terminal galactose on both O- and N-linked glycans chains of cell surface glycoproteins and glycolipids and the resulting epitope regulates several processes such as cell-cell interaction including host-microbe interaction, cell surface expression and cell proliferation. Preferentially fucosylates gangliosides GA1 and GM1 in the antrum, cecum and colon and in the female reproductive organs. Fucosylated host glycoproteins or glycolipids mediate interaction with intestinal microbiota influencing its composition. Creates a soluble precursor oligosaccharide FuC-alpha ((1,2)Galbeta-) called the H antigen which is an essential substrate for the final step in the soluble ABO blood group antigen synthesis pathway. The sequence is that of Galactoside alpha-(1,2)-fucosyltransferase 2 from Bos taurus (Bovine).